We begin with the raw amino-acid sequence, 418 residues long: Delta(14)-sterol reductase TM7SF2 (418 aa).

The next 6 membrane-spanning stretches (helical) occupy residues 13–35, 62–81, 102–124, 129–148, 255–277, and 287–304; these read FGGP…HLLL, ALLL…LLPA, GFQA…LPLS, MLLP…SLLL, FGFM…QAQF, and WPLA…YYIF. NADP(+) is bound by residues lysine 311, arginine 315, leucine 338, tryptophan 343, and 350-351; that span reads NY. The helical transmembrane segment at 355–377 threads the bilayer; sequence LIMALAWSLPCGVFHLLPYFYFL. Residues aspartate 390, 394 to 398, and tyrosine 405 each bind NADP(+); that span reads CRQKY.

This sequence belongs to the ERG4/ERG24 family. In terms of tissue distribution, highly expressed in liver and brain.

The protein resides in the microsome membrane. It is found in the endoplasmic reticulum membrane. The enzyme catalyses 4,4-dimethyl-5alpha-cholesta-8,24-dien-3beta-ol + NADP(+) = 4,4-dimethyl-5alpha-cholesta-8,14,24-trien-3beta-ol + NADPH + H(+). The catalysed reaction is 5alpha-cholest-8,14-dien-3beta-ol + NADPH + H(+) = 5alpha-cholest-8-en-3beta-ol + NADP(+). It catalyses the reaction 4,4-dimethyl-8,14-cholestadien-3beta-ol + NADPH + H(+) = 4,4-dimethyl-5alpha-cholest-8-en-3beta-ol + NADP(+). The protein operates within steroid biosynthesis; cholesterol biosynthesis. In terms of biological role, catalyzes the reduction of the C14-unsaturated bond of lanosterol, as part of the metabolic pathway leading to cholesterol biosynthesis. The sequence is that of Delta(14)-sterol reductase TM7SF2 (TM7SF2) from Bos taurus (Bovine).